Consider the following 24-residue polypeptide: Brevinin-1Ecb (24 aa).

A disulfide bond links C18 and C24.

In terms of tissue distribution, expressed by the skin glands.

Its subcellular location is the secreted. Its function is as follows. Shows antibacterial activity against representative Gram-negative and Gram-positive bacterial species, and hemolytic activity. This Pelophylax ridibundus (Marsh frog) protein is Brevinin-1Ecb.